The primary structure comprises 203 residues: B-cell CLL/lymphoma 7 protein family member B-A (203 aa).

Disordered regions lie at residues 55–80 (KEKEKSKVSVGGEMQRKNFPSEESSD) and 94–148 (SNQS…EIME). Low complexity predominate over residues 109–129 (ADSSNNSSPPASEPVSPAPQS).

This sequence belongs to the BCL7 family.

This Danio rerio (Zebrafish) protein is B-cell CLL/lymphoma 7 protein family member B-A (bcl7ba).